Consider the following 612-residue polypeptide: Probable cytosolic Fe-S cluster assembly factor SJAG_02895 (612 aa).

ATP is bound at residue G13 to S20. Positions 200 and 203 each coordinate [4Fe-4S] cluster. WD repeat units follow at residues G287–V326, Y330–V370, G375–C414, E420–T459, S464–A503, T528–H566, and A574–A612.

In the N-terminal section; belongs to the Mrp/NBP35 ATP-binding proteins family. NUBP2/CFD1 subfamily. It in the C-terminal section; belongs to the WD repeat CIA1 family. Heterotetramer of 2 nbp35 and 2 SJAG_02895 chains. Requires [4Fe-4S] cluster as cofactor.

The protein resides in the cytoplasm. The protein localises to the nucleus. Its function is as follows. Fusion protein of two essential components of the cytosolic iron-sulfur (Fe/S) protein assembly (CIA) machinery. Required for maturation of extramitochondrial Fe-S proteins. May form a heterotetramer with nubp35, functioning as a Fe-S scaffold complex, mediating the de novo assembly of an Fe-S cluster and its transfer to target apoproteins. This Schizosaccharomyces japonicus (strain yFS275 / FY16936) (Fission yeast) protein is Probable cytosolic Fe-S cluster assembly factor SJAG_02895.